The sequence spans 305 residues: Maximins-S type B/C (305 aa).

The signal sequence occupies residues 1 to 18 (MNFNYFILVLFFITSGHA). 2 propeptides span residues 19–35 (KSET…HIKR) and 52–65 (SAEE…LVTR). An Asparagine amide modification is found at Asn83. Residues 87–100 (SAEEQDLAEHLVTR) constitute a propeptide that is removed on maturation. An Asparagine amide modification is found at Asn118. The propeptide occupies 122-135 (SAEEQDLAEDLVTR). The residue at position 153 (Lys153) is a Lysine amide. The propeptide occupies 157–170 (SAEDQDLAEDLVTR). Asn188 carries the asparagine amide modification. The propeptide occupies 192–205 (SAEEQDLAEHLVTR). Asn223 carries the post-translational modification Asparagine amide. The propeptide occupies 227–240 (SAEEQDLSEDLVTR). Position 258 is an asparagine amide (Asn258). The propeptide occupies 262–275 (SAEEQDLVEDLVTR). Position 293 is a lysine amide (Lys293). A propeptide spanning residues 297 to 305 (SAEQEKDMK) is cleaved from the precursor.

The protein belongs to the maximin-S family. As to expression, expressed by the skin dorsal glands.

The protein localises to the secreted. Its function is as follows. Maximin-S1 has no antimicrobial activity. Has no hemolytic activity. In terms of biological role, maximin-S2 has an activity against mycoplasma but has no activity against common Gram-positive and Gram-negative bacteria nor fungi. Has no hemolytic activity. Functionally, maximin-S3 has an activity against mycoplasma but has no activity against common Gram-positive and Gram-negative bacteria nor fungi. Has no hemolytic activity. Maximin-S4 has an activity against mycoplasma but has no activity against common Gram-positive and Gram-negative bacteria nor fungi. Has no hemolytic activity. Its function is as follows. Maximin-S5 has an activity against mycoplasma but has no activity against common Gram-positive and Gram-negative bacteria nor fungi. Has no hemolytic activity. This Bombina maxima (Giant fire-bellied toad) protein is Maximins-S type B/C.